The sequence spans 302 residues: NAD kinase (302 aa).

Catalysis depends on aspartate 79, which acts as the Proton acceptor. NAD(+)-binding positions include 79–80 (DG), 153–154 (ND), arginine 181, aspartate 183, 194–199 (TAYALS), alanine 218, and glutamine 252.

This sequence belongs to the NAD kinase family. A divalent metal cation serves as cofactor.

Its subcellular location is the cytoplasm. It carries out the reaction NAD(+) + ATP = ADP + NADP(+) + H(+). In terms of biological role, involved in the regulation of the intracellular balance of NAD and NADP, and is a key enzyme in the biosynthesis of NADP. Catalyzes specifically the phosphorylation on 2'-hydroxyl of the adenosine moiety of NAD to yield NADP. This chain is NAD kinase, found in Ralstonia nicotianae (strain ATCC BAA-1114 / GMI1000) (Ralstonia solanacearum).